We begin with the raw amino-acid sequence, 129 residues long: MATKKGTRKRRAKKNVETGVAHIHSTFNNTLIMITDVQGNAVAWSSAGVLGFKGSRKSTPFAAQMASEAAAKQAMEHGMKTVEVEVKGPGSGREAAIRALQATGLEVTAIRDVTPVPHNGSRPPKRRRV.

Belongs to the universal ribosomal protein uS11 family. As to quaternary structure, part of the 30S ribosomal subunit. Interacts with proteins S7 and S18. Binds to IF-3.

Functionally, located on the platform of the 30S subunit, it bridges several disparate RNA helices of the 16S rRNA. Forms part of the Shine-Dalgarno cleft in the 70S ribosome. This chain is Small ribosomal subunit protein uS11, found in Limosilactobacillus reuteri (strain DSM 20016) (Lactobacillus reuteri).